We begin with the raw amino-acid sequence, 510 residues long: Light-independent protochlorophyllide reductase subunit B (510 aa).

Residue Asp-36 coordinates [4Fe-4S] cluster. Asp-297 serves as the catalytic Proton donor. 432–433 (GM) provides a ligand contact to substrate.

It belongs to the ChlB/BchB/BchZ family. Protochlorophyllide reductase is composed of three subunits; ChlL, ChlN and ChlB. Forms a heterotetramer of two ChlB and two ChlN subunits. [4Fe-4S] cluster is required as a cofactor.

It is found in the plastid. It localises to the chloroplast. The catalysed reaction is chlorophyllide a + oxidized 2[4Fe-4S]-[ferredoxin] + 2 ADP + 2 phosphate = protochlorophyllide a + reduced 2[4Fe-4S]-[ferredoxin] + 2 ATP + 2 H2O. It participates in porphyrin-containing compound metabolism; chlorophyll biosynthesis (light-independent). Functionally, component of the dark-operative protochlorophyllide reductase (DPOR) that uses Mg-ATP and reduced ferredoxin to reduce ring D of protochlorophyllide (Pchlide) to form chlorophyllide a (Chlide). This reaction is light-independent. The NB-protein (ChlN-ChlB) is the catalytic component of the complex. The chain is Light-independent protochlorophyllide reductase subunit B from Pinus thunbergii (Japanese black pine).